The sequence spans 87 residues: UPF0250 protein BUAPTUC7_482 (87 aa).

This sequence belongs to the UPF0250 family.

In Buchnera aphidicola subsp. Acyrthosiphon pisum (strain Tuc7), this protein is UPF0250 protein BUAPTUC7_482.